A 354-amino-acid chain; its full sequence is Peripherin-2 (354 aa).

Topologically, residues 1–24 (MALLKVKFNQKKRVKLAQGLWLMN) are cytoplasmic. Residues 25–43 (WFSVFAGIIVFSMGLFLKI) form a helical membrane-spanning segment. Topologically, residues 44–61 (ELRKRSEVMDNSESHFVP) are lumenal. The helical transmembrane segment at 62-80 (NSLILMGILSCAFNGFAGK) threads the bilayer. At 81–99 (ICYDSLDPAKFAKWKPLLK) the chain is on the cytoplasmic side. The chain crosses the membrane as a helical span at residues 100 to 123 (PYLALCFFFNILLFFVALICFLMR). The Lumenal segment spans residues 124-264 (GSLESTLAQG…LHYYSSMMSS (141 aa)). N229 carries an N-linked (GlcNAc...) asparagine glycan. Residues 265–290 (MGAVVLLVWLFEMSVMVGLRLLHTSL) form a helical membrane-spanning segment. Over 291–354 (ESIANPEDPE…GKTPAITTVS (64 aa)) the chain is Cytoplasmic. Residues 335–354 (GAEGAEGEEAGKTPAITTVS) are disordered.

The protein belongs to the PRPH2/ROM1 family. In terms of assembly, homodimer; disulfide-linked.

It is found in the membrane. Functionally, may be involved in the morphogenesis of retina outer segment disks and the development and maintenance of the retina ultrastructure. The protein is Peripherin-2 (PRPH2) of Gallus gallus (Chicken).